The primary structure comprises 662 residues: MDKKKLIEELVEELNKYAYEYYVLGNSSVTDKDYDKKYYELVDLEKETGYKLPYSPTQRVGDVILPEFKKYTHKARLWSLDKAQTLEEIREWHNRNVKFLEEYNRTSDEELPPLKYILTKKFDGLTINLSYDENGVLVTGATRGTGAIGEDVTAQVKTIKSIPLKIDCHDFLEIHGEAIMTTEAFEKYNSEADTPLKNLRNGAAGALRNLNVAETAKRNLSAFFYDVGYKEGAPFKTYMEMLNFIKTKGFPMDDYIRECTTLDEIQKEIDYIRDIRFDLNYDIDGLVIAIDDIRTRELLGYTVKFPKWAIAYKFEAQEATTKLLDVEWNVGRSGRVSPTAILEPVELAGVTVKRATLNNMDDIARKGVRLGAEVFVRRSNDVIPEIMGVVPESLEGTKEIEEPKVCPACGAHLVHEGVHIYCENTLGCKPQMVKTIVHFAGREAMNIAGFSEKTAEQLFEKLDIRDISDLYKLEYEKLLDLDKFGPKKAQNLLDAIEKSKDCTLEAFLYSLGIPNVGVKTAKDLVKRFESLENLEKATFEELVSVQDVGDIVARSIIEFFKEERTLKVINELLSLGVNPHYEKKEVLESPFMGKTVVVTGTLENYSRTSIKEKLESLGAKVSGSVSKKTDFVIAGEAAGSKYDKAKSLGVTILSEEEFENMI.

Residues 31–35 and 79–80 each bind NAD(+); these read DKDYD and SL. Residue lysine 121 is the N6-AMP-lysine intermediate of the active site. NAD(+) contacts are provided by arginine 143, glutamate 177, and lysine 313. 4 residues coordinate Zn(2+): cysteine 406, cysteine 409, cysteine 422, and cysteine 428. Residues 586–662 form the BRCT domain; the sequence is VLESPFMGKT…LSEEEFENMI (77 aa).

This sequence belongs to the NAD-dependent DNA ligase family. LigA subfamily. It depends on Mg(2+) as a cofactor. Mn(2+) serves as cofactor.

It carries out the reaction NAD(+) + (deoxyribonucleotide)n-3'-hydroxyl + 5'-phospho-(deoxyribonucleotide)m = (deoxyribonucleotide)n+m + AMP + beta-nicotinamide D-nucleotide.. Its function is as follows. DNA ligase that catalyzes the formation of phosphodiester linkages between 5'-phosphoryl and 3'-hydroxyl groups in double-stranded DNA using NAD as a coenzyme and as the energy source for the reaction. It is essential for DNA replication and repair of damaged DNA. In Clostridium perfringens (strain ATCC 13124 / DSM 756 / JCM 1290 / NCIMB 6125 / NCTC 8237 / Type A), this protein is DNA ligase.